Here is a 308-residue protein sequence, read N- to C-terminus: Methionyl-tRNA formyltransferase (308 aa).

109 to 112 (SLLP) serves as a coordination point for (6S)-5,6,7,8-tetrahydrofolate.

Belongs to the Fmt family.

It carries out the reaction L-methionyl-tRNA(fMet) + (6R)-10-formyltetrahydrofolate = N-formyl-L-methionyl-tRNA(fMet) + (6S)-5,6,7,8-tetrahydrofolate + H(+). Functionally, attaches a formyl group to the free amino group of methionyl-tRNA(fMet). The formyl group appears to play a dual role in the initiator identity of N-formylmethionyl-tRNA by promoting its recognition by IF2 and preventing the misappropriation of this tRNA by the elongation apparatus. The polypeptide is Methionyl-tRNA formyltransferase (Methylococcus capsulatus (strain ATCC 33009 / NCIMB 11132 / Bath)).